The sequence spans 288 residues: MAATFFGEVVKAPCRAGTEDEEEEEEGRRETPEDREVRLQLARKREVRLLRRQTKTSLEVSLLEKYPCSKFIIAIGNNAVAFLSSFVMNSGVWEEVGCAKLWNEWCRTTDTTHLSSTEAFCVFYHLKSNPSVFLCQCSCYVAEDQQYQWLEKVFGSCPRKNMQITILTCRHVTDYKTSESTGSLPSPFLRALKTQNFKDSACCPLLEQPNIVHDLPAAVLSYCQVWKIPAILYLCYTDVMKLDLITVEAFKPILSTRSLKGLVKNIPQSTEILKKLMTTNEIQSNIYT.

Ala-2 carries the N-acetylalanine modification. The tract at residues 13–35 (PCRAGTEDEEEEEEGRRETPEDR) is disordered. Thr-18 is subject to Phosphothreonine. The segment covering 26 to 35 (EGRRETPEDR) has biased composition (basic and acidic residues). Thr-54 bears the Phosphothreonine mark. Ser-180 carries the phosphoserine modification. Lys-264 bears the N6-acetyllysine mark.

Belongs to the PSMG1 family. As to quaternary structure, forms a heterodimer with PSMG2. The PSMG1-PSMG2 heterodimer interacts directly with the PSMA5 and PSMA7 proteasome alpha subunits. Degraded by the proteasome upon completion of 20S proteasome maturation. As to expression, in the adult, detected in brain, colon, leukocytes, breast and testis. Widely expressed in the fetus. Also expressed in a variety of proliferating cell lines.

The protein resides in the cytoplasm. It is found in the endoplasmic reticulum. Chaperone protein which promotes assembly of the 20S proteasome as part of a heterodimer with PSMG2. The PSMG1-PSMG2 heterodimer binds to the PSMA5 and PSMA7 proteasome subunits, promotes assembly of the proteasome alpha subunits into the heteroheptameric alpha ring and prevents alpha ring dimerization. The chain is Proteasome assembly chaperone 1 from Homo sapiens (Human).